A 115-amino-acid chain; its full sequence is Putative type I restriction enzyme MpnIIP endonuclease subunit middle part (115 aa).

Its function is as follows. The middle section of a putative type I restriction enzyme that if reconstituted might recognize 5'-GAN(7)TAY-3' and cleave a random distance away. Subunit R is required for both nuclease and ATPase activities, but not for modification. In Mycoplasma pneumoniae (strain ATCC 29342 / M129 / Subtype 1) (Mycoplasmoides pneumoniae), this protein is Putative type I restriction enzyme MpnIIP endonuclease subunit middle part.